A 238-amino-acid polypeptide reads, in one-letter code: Sugar fermentation stimulation protein homolog (238 aa).

The protein belongs to the SfsA family.

The chain is Sugar fermentation stimulation protein homolog from Vibrio vulnificus (strain YJ016).